Consider the following 120-residue polypeptide: NAD(P)H-quinone oxidoreductase subunit 3, chloroplastic (120 aa).

Helical transmembrane passes span 9 to 29, 64 to 84, and 88 to 108; these read IFWAFLIISSAIPVLAFLISG, MFALVFVVFDVETVFLYPWAM, and VLGVSAFIEALIFVLILILGL.

It belongs to the complex I subunit 3 family. NDH is composed of at least 16 different subunits, 5 of which are encoded in the nucleus.

The protein localises to the plastid. The protein resides in the chloroplast thylakoid membrane. The enzyme catalyses a plastoquinone + NADH + (n+1) H(+)(in) = a plastoquinol + NAD(+) + n H(+)(out). The catalysed reaction is a plastoquinone + NADPH + (n+1) H(+)(in) = a plastoquinol + NADP(+) + n H(+)(out). Functionally, NDH shuttles electrons from NAD(P)H:plastoquinone, via FMN and iron-sulfur (Fe-S) centers, to quinones in the photosynthetic chain and possibly in a chloroplast respiratory chain. The immediate electron acceptor for the enzyme in this species is believed to be plastoquinone. Couples the redox reaction to proton translocation, and thus conserves the redox energy in a proton gradient. The protein is NAD(P)H-quinone oxidoreductase subunit 3, chloroplastic of Olimarabidopsis pumila (Dwarf rocket).